Reading from the N-terminus, the 407-residue chain is Imidazolonepropionase (407 aa).

The Fe(3+) site is built by His-68 and His-70. Residues His-68 and His-70 each contribute to the Zn(2+) site. Residues Arg-77, Tyr-140, and His-173 each coordinate 4-imidazolone-5-propanoate. Position 140 (Tyr-140) interacts with N-formimidoyl-L-glutamate. His-238 lines the Fe(3+) pocket. Residue His-238 coordinates Zn(2+). A 4-imidazolone-5-propanoate-binding site is contributed by Gln-241. A Fe(3+)-binding site is contributed by Asp-313. Asp-313 is a binding site for Zn(2+). N-formimidoyl-L-glutamate is bound by residues Asn-315 and Gly-317. Thr-318 contacts 4-imidazolone-5-propanoate.

Belongs to the metallo-dependent hydrolases superfamily. HutI family. Requires Zn(2+) as cofactor. The cofactor is Fe(3+).

The protein localises to the cytoplasm. The catalysed reaction is 4-imidazolone-5-propanoate + H2O = N-formimidoyl-L-glutamate. It functions in the pathway amino-acid degradation; L-histidine degradation into L-glutamate; N-formimidoyl-L-glutamate from L-histidine: step 3/3. Its function is as follows. Catalyzes the hydrolytic cleavage of the carbon-nitrogen bond in imidazolone-5-propanoate to yield N-formimidoyl-L-glutamate. It is the third step in the universal histidine degradation pathway. The polypeptide is Imidazolonepropionase (Burkholderia pseudomallei (strain 1710b)).